A 488-amino-acid chain; its full sequence is Germacrene A hydroxylase (488 aa).

A helical; Signal-anchor for type II membrane protein transmembrane segment spans residues Thr7–Thr23. N-linked (GlcNAc...) asparagine glycans are attached at residues Asn169, Asn260, Asn379, and Asn410. A heme-binding site is contributed by Cys432.

Belongs to the cytochrome P450 family. In terms of tissue distribution, expressed in floral glandular trichomes.

Its subcellular location is the endoplasmic reticulum membrane. It catalyses the reaction (+)-(R)-germacrene A + 3 reduced [NADPH--hemoprotein reductase] + 3 O2 = germacra-1(10),4,11(13)-trien-12-oate + 3 oxidized [NADPH--hemoprotein reductase] + 4 H2O + 4 H(+). The protein operates within secondary metabolite biosynthesis; terpenoid biosynthesis. In terms of biological role, involved in the biosynthesis of germacrene-derived sesquiterpene lactones. Component of the parthenolide biosynthetic pathway; parthenolide and conjugates are promising anti-cancer drugs highly active against colon cancer cells. Catalyzes three consecutive oxidations of germacrene A to produce germacrene A acid. In Tanacetum parthenium (Feverfew), this protein is Germacrene A hydroxylase.